The primary structure comprises 674 residues: Transcription activator of gluconeogenesis PMAA_028970 (674 aa).

Residues 1–46 form a disordered region; sequence MMDTDKDDLPSATDHSEHESGDAVKVEGGASKTASNSKDPSRPRRK. Residues 14-25 show a composition bias toward basic and acidic residues; that stretch reads DHSEHESGDAVK. The zn(2)-C6 fungal-type DNA-binding region spans 52–80; it reads CFACQRAHLTCGDERPCQRCIKRGLQDAC. Disordered regions lie at residues 117–181, 250–321, 344–374, and 519–557; these read ISPT…ATPA, TGAG…SGLY, IGSN…SPMK, and NLNV…PGPN. A compositionally biased stretch (polar residues) spans 120–148; the sequence is TEYTQNGTNNAQQQQQKSGTIYASSTPSY. Over residues 149-163 the composition is skewed to low complexity; that stretch reads NNNNGTFDTNNATNT. 2 stretches are compositionally biased toward polar residues: residues 269 to 278 and 285 to 294; these read GQRSNSQQFG and TTESPSQQSF. Low complexity-rich tracts occupy residues 348–366 and 529–540; these read TFAS…IAPS and NTSSQSDSTSSS.

Belongs to the ERT1/acuK family.

It localises to the nucleus. Transcription factor which regulates nonfermentable carbon utilization. Activator of gluconeogenetic genes. This is Transcription activator of gluconeogenesis PMAA_028970 from Talaromyces marneffei (strain ATCC 18224 / CBS 334.59 / QM 7333) (Penicillium marneffei).